The chain runs to 618 residues: Glycine--tRNA ligase 2 (618 aa).

E187 contributes to the glycine binding site. ATP-binding positions include 219-221 and 230-231; these read RNE and RV. Residue E238 participates in glycine binding. Residue 347-348 participates in ATP binding; it reads EC. 466 to 468 contributes to the glycine binding site; the sequence is EPS. Residue R473 participates in ATP binding.

It belongs to the class-II aminoacyl-tRNA synthetase family. In terms of assembly, homodimer.

The protein resides in the cytoplasm. The enzyme catalyses tRNA(Gly) + glycine + ATP = glycyl-tRNA(Gly) + AMP + diphosphate. It catalyses the reaction 2 ATP + H(+) = P(1),P(4)-bis(5'-adenosyl) tetraphosphate + diphosphate. Catalyzes the ATP-dependent ligation of glycine to the 3'-end of its cognate tRNA, via the formation of an aminoacyl-adenylate intermediate (Gly-AMP). Also produces diadenosine tetraphosphate (Ap4A), a universal pleiotropic signaling molecule needed for cell regulation pathways, by direct condensation of 2 ATPs. Thereby, may play a special role in Ap4A homeostasis. The chain is Glycine--tRNA ligase 2 (GRS2) from Saccharomyces cerevisiae (strain ATCC 204508 / S288c) (Baker's yeast).